Here is a 785-residue protein sequence, read N- to C-terminus: Hyperosmolality-gated Ca2+ permeable channel 1.7 (785 aa).

The helical transmembrane segment at 7–27 (IGLSAAINLLSAFAFLFAFAM) threads the bilayer. Ser-54 carries the post-translational modification Phosphoserine. 9 helical membrane-spanning segments follow: residues 101–121 (IYLL…GVLV), 156–176 (FWAH…ILYM), 373–393 (LLTT…IAFV), 425–445 (FLPG…LMTM), 465–485 (YFWF…TAFQ), 510–530 (ATFF…AEIL), 582–602 (AVAP…YVVF), 628–648 (LIIC…TKKF), and 651–671 (VTAL…YCAG). Residues 725–761 (VDEEESNPLVRTKRTSQGTTRYNSEASSSATTTPVAN) form a disordered region. The span at 739 to 761 (TSQGTTRYNSEASSSATTTPVAN) shows a compositional bias: polar residues.

Belongs to the CSC1 (TC 1.A.17) family. In terms of processing, phosphorylated and activated by BIK1.

It localises to the membrane. It carries out the reaction Ca(2+)(in) = Ca(2+)(out). Its function is as follows. Calcium-permeable channel involved in plant stomatal immunity. The sequence is that of Hyperosmolality-gated Ca2+ permeable channel 1.7 from Arabidopsis thaliana (Mouse-ear cress).